A 479-amino-acid chain; its full sequence is Aspartyl/glutamyl-tRNA(Asn/Gln) amidotransferase subunit B (479 aa).

The protein belongs to the GatB/GatE family. GatB subfamily. As to quaternary structure, heterotrimer of A, B and C subunits.

The enzyme catalyses L-glutamyl-tRNA(Gln) + L-glutamine + ATP + H2O = L-glutaminyl-tRNA(Gln) + L-glutamate + ADP + phosphate + H(+). The catalysed reaction is L-aspartyl-tRNA(Asn) + L-glutamine + ATP + H2O = L-asparaginyl-tRNA(Asn) + L-glutamate + ADP + phosphate + 2 H(+). In terms of biological role, allows the formation of correctly charged Asn-tRNA(Asn) or Gln-tRNA(Gln) through the transamidation of misacylated Asp-tRNA(Asn) or Glu-tRNA(Gln) in organisms which lack either or both of asparaginyl-tRNA or glutaminyl-tRNA synthetases. The reaction takes place in the presence of glutamine and ATP through an activated phospho-Asp-tRNA(Asn) or phospho-Glu-tRNA(Gln). The chain is Aspartyl/glutamyl-tRNA(Asn/Gln) amidotransferase subunit B from Alcanivorax borkumensis (strain ATCC 700651 / DSM 11573 / NCIMB 13689 / SK2).